The primary structure comprises 97 residues: Defensin-A2 (97 aa).

The signal sequence occupies residues 1-19 (MRTLSLLLALLFLAAQTLA). Positions 20–61 (QPIDEGAEEVITEEPEITETQDPTTIMLIERGIGGDSTDATR) are excised as a propeptide. Cystine bridges form between cysteine 66–cysteine 93, cysteine 68–cysteine 82, and cysteine 72–cysteine 92. Residues 96–97 (TS) constitute a propeptide that is removed on maturation.

It belongs to the alpha-defensin family. Highly expressed in intestine, expressed at lower levels in spleen, and at very low levels in kidney and lung.

The protein localises to the secreted. Has antimicrobial activity. In Ornithorhynchus anatinus (Duckbill platypus), this protein is Defensin-A2.